Here is a 203-residue protein sequence, read N- to C-terminus: Urease accessory protein UreE (203 aa).

Residues 170–190 (EHHGHSHSRSHDHDHDHDHQH) are compositionally biased toward basic and acidic residues. A disordered region spans residues 170 to 203 (EHHGHSHSRSHDHDHDHDHQHGPSCSHGHHHGHR).

It belongs to the UreE family.

Its subcellular location is the cytoplasm. In terms of biological role, involved in urease metallocenter assembly. Binds nickel. Probably functions as a nickel donor during metallocenter assembly. The sequence is that of Urease accessory protein UreE from Burkholderia pseudomallei (strain 1710b).